Consider the following 426-residue polypeptide: Serine--tRNA ligase (426 aa).

233 to 235 (TAE) lines the L-serine pocket. An ATP-binding site is contributed by 264–266 (RSE). L-serine is bound at residue Glu287. Residue 351–354 (EISS) coordinates ATP. Ser387 provides a ligand contact to L-serine.

Belongs to the class-II aminoacyl-tRNA synthetase family. Type-1 seryl-tRNA synthetase subfamily. Homodimer. The tRNA molecule binds across the dimer.

It localises to the cytoplasm. The catalysed reaction is tRNA(Ser) + L-serine + ATP = L-seryl-tRNA(Ser) + AMP + diphosphate + H(+). It catalyses the reaction tRNA(Sec) + L-serine + ATP = L-seryl-tRNA(Sec) + AMP + diphosphate + H(+). It functions in the pathway aminoacyl-tRNA biosynthesis; selenocysteinyl-tRNA(Sec) biosynthesis; L-seryl-tRNA(Sec) from L-serine and tRNA(Sec): step 1/1. Catalyzes the attachment of serine to tRNA(Ser). Is also able to aminoacylate tRNA(Sec) with serine, to form the misacylated tRNA L-seryl-tRNA(Sec), which will be further converted into selenocysteinyl-tRNA(Sec). The sequence is that of Serine--tRNA ligase from Clostridium botulinum (strain Okra / Type B1).